Consider the following 59-residue polypeptide: Potassium channel toxin alpha-KTx 15.2 (59 aa).

A signal peptide spans 1-22 (MKFSSIILLTLLICSMSKFGNC). Glutamine 23 is modified (pyrrolidone carboxylic acid). 3 disulfide bridges follow: cysteine 30–cysteine 50, cysteine 35–cysteine 55, and cysteine 39–cysteine 57.

The protein belongs to the short scorpion toxin superfamily. Potassium channel inhibitor family. Alpha-KTx 15 subfamily. Expressed by the venom gland.

Its subcellular location is the secreted. In terms of biological role, blocks both human ERG1/Kv11.1/KCNH2 potassium channels (in a reversible manner) and A-type voltage-gated potassium channels Kv4/KCND (in an irreversible manner). The presence of the Kv4-associated proteins DPP6 or DPP10 is mandatory to have high-affinity blockade of Kv4.2/KCND2 and Kv4.3/KCND3 channels. In contrast, the presence of the Kv4-associated protein KChIP1/KCNIP1 does not enhance the affinity blockade. May dispose of two functional faces (A and B); the two basic residues (Arg-40 and Lys-41) on the alpha-helix side of the peptide that blocks the hERG current (face A) and the typical dyad through which it blocks A-type currents on the beta-sheet side (face B). In adult rat brain, it binds to sites in the striatum, hippocampus, superior colliculus, and cerebellum. It shares the same target in rat brain than AaTX1 (AC Q867F4) and AmmTX3 (AC P60208). In DPP6 knockout mice, A-type currents are much less affected by the toxin than in wild-type mice. The protein is Potassium channel toxin alpha-KTx 15.2 of Olivierus martensii (Manchurian scorpion).